Consider the following 458-residue polypeptide: tRNA modification GTPase MnmE (458 aa).

(6S)-5-formyl-5,6,7,8-tetrahydrofolate-binding residues include Arg-22, Glu-84, and Arg-123. In terms of domain architecture, TrmE-type G spans 220–379 (GIATAIIGRP…LEKAIADLFF (160 aa)). Asn-230 is a K(+) binding site. GTP-binding positions include 230–235 (NVGKSS), 249–255 (TDIAGTT), and 274–277 (DTAG). Residue Ser-234 coordinates Mg(2+). The K(+) site is built by Thr-249, Ile-251, and Thr-254. Thr-255 is a Mg(2+) binding site. Lys-458 is a binding site for (6S)-5-formyl-5,6,7,8-tetrahydrofolate.

This sequence belongs to the TRAFAC class TrmE-Era-EngA-EngB-Septin-like GTPase superfamily. TrmE GTPase family. In terms of assembly, homodimer. Heterotetramer of two MnmE and two MnmG subunits. It depends on K(+) as a cofactor.

It localises to the cytoplasm. Exhibits a very high intrinsic GTPase hydrolysis rate. Involved in the addition of a carboxymethylaminomethyl (cmnm) group at the wobble position (U34) of certain tRNAs, forming tRNA-cmnm(5)s(2)U34. The sequence is that of tRNA modification GTPase MnmE from Bacillus anthracis.